Here is a 105-residue protein sequence, read N- to C-terminus: Large ribosomal subunit protein uL24 (105 aa).

This sequence belongs to the universal ribosomal protein uL24 family. In terms of assembly, part of the 50S ribosomal subunit.

Functionally, one of two assembly initiator proteins, it binds directly to the 5'-end of the 23S rRNA, where it nucleates assembly of the 50S subunit. One of the proteins that surrounds the polypeptide exit tunnel on the outside of the subunit. This chain is Large ribosomal subunit protein uL24, found in Halorhodospira halophila (strain DSM 244 / SL1) (Ectothiorhodospira halophila (strain DSM 244 / SL1)).